The sequence spans 134 residues: Cytochrome b5 (134 aa).

N-acetylalanine is present on Ala2. 3 positions are modified to N6-acetyllysine: Lys7, Lys10, and Lys19. Residues 9–85 (VKYYTLEEIQ…SKTFIIGELH (77 aa)) enclose the Cytochrome b5 heme-binding domain. Residues His44 and His68 each contribute to the heme site. The chain crosses the membrane as a helical span at residues 109–131 (WWTNWVIPAISALVVSLMYHFYT).

This sequence belongs to the cytochrome b5 family.

The protein localises to the endoplasmic reticulum membrane. The protein resides in the microsome membrane. It localises to the cytoplasm. Its function is as follows. Cytochrome b5 is a membrane-bound hemoprotein functioning as an electron carrier for several membrane-bound oxygenases. The protein is Cytochrome b5 (CYB5A) of Sus scrofa (Pig).